Consider the following 2346-residue polypeptide: Myomegalin (2346 aa).

Coiled coils occupy residues 41–132, 162–205, 238–318, and 350–684; these read REDI…LVEA, DQYT…LLEE, DSHL…REML, and CSQL…RQYL. Position 252 is a phosphoserine (glutamate 252). The segment at 698 to 732 is disordered; sequence NQQAEVTPTGRLGKQTDQGSMQIPSRDDSTSLTAK. Threonine 704 carries the phosphothreonine modification. Over residues 722–732 the composition is skewed to basic and acidic residues; the sequence is SRDDSTSLTAK. 6 coiled-coil regions span residues 743–936, 1002–1043, 1096–1124, 1212–1240, 1346–1385, and 1431–1455; these read GDLD…TLAA, LQEE…SSVS, SSLQ…EQLV, STQH…SEAT, GKSE…LSVT, and GLQA…LPKN. The disordered stretch occupies residues 1193–1214; sequence DNQSQPRDPGPQSAFSLPGSTQ. Residues 1205-1214 show a composition bias toward polar residues; it reads SAFSLPGSTQ. The Olduvai domain occupies 1551-1642; that stretch reads KDHKSEKDQA…EEKKASPSHS (92 aa). Low complexity predominate over residues 1591 to 1600; the sequence is SLTPSSSHAL. 2 disordered regions span residues 1591 to 1614 and 1633 to 1690; these read SLTP…SFLS and EEKK…EANQ. The span at 1652-1690 shows a compositional bias: polar residues; the sequence is AVLSSKPSSTSASQGAKAESNSNPISLPTPQNTPKEANQ. Coiled-coil stretches lie at residues 1736–1760 and 1840–2077; these read VVSL…ASTV and GADL…QQLE. Disordered regions lie at residues 2081–2103 and 2127–2156; these read GKAS…PGNK and VFPS…TSPV. Polar residues predominate over residues 2085-2103; sequence LSPSSINQNFPASTDPGNK. A coiled-coil region spans residues 2273–2312; sequence ESTERELLELRTKVSKQERLLQSTTEHLKNANQQKESMEQ.

As to quaternary structure, interacts with PDE4D. Isoform 13 interacts with MAPRE1 and MAPRE3. Isoform 13 forms a pericentrosomal complex with AKAP9, CDK5RAP2 and EB1/MAPRE1; within this complex, may mediate MAPRE1-binding to CDK5RAP2. Interaction of isoform 13 with AKAP9 stabilizes both proteins. Isoform 13 interacts (via N-terminus) with CAMSAP2; this interaction is much stronger in the presence of AKAP9. In complex with AKAP9, Isoform 13 recruits CAMSAP2 to the Golgi apparatus. Isoform 13 interacts with unglycosylated LGALS3BP; this interaction may connect the pericentrosomal complex to the gamma-tubulin ring complex (gamma-TuRC) to promote microtubule assembly and acetylation. Highly expressed in adult and fetal heart, in skeletal muscle and, to a lower extent, in brain and placenta.

The protein resides in the golgi apparatus. It is found in the cytoplasm. It localises to the cytoskeleton. Its subcellular location is the microtubule organizing center. The protein localises to the centrosome. Its function is as follows. Functions as an anchor sequestering components of the cAMP-dependent pathway to Golgi and/or centrosomes. Participates in microtubule dynamics, promoting microtubule assembly. Depending upon the cell context, may act at the level of the Golgi apparatus or that of the centrosome. In complex with AKAP9, recruits CAMSAP2 to the Golgi apparatus and tethers non-centrosomal minus-end microtubules to the Golgi, an important step for polarized cell movement. In complex with AKAP9, EB1/MAPRE1 and CDK5RAP2, contributes to microtubules nucleation and extension from the centrosome to the cell periphery, a crucial process for directed cell migration, mitotic spindle orientation and cell-cycle progression. This Homo sapiens (Human) protein is Myomegalin (PDE4DIP).